The chain runs to 298 residues: MKIRGFESSMMGKDIDFIPPAMTRLCCLNEISHALAGVMAVEKAYNITVPNEGQYLREIARLGEIVEVDAIKLREFKNTDDLADIGNKIKSVLGKKAKYLAVGGVLENISDKRKEKLINLAKEGLNLVDKDFVKLVDERKAKIPLPDVELIDAYNFDANKVETNGLPKTALYDGKVVYSGSLARMYKEGLINSKNLWDVLSSRMIEIEFCLNKIIELLNKLKLTHPYMEPIIKDGKAIGEAVIEGGEGIVYHKVELLGREILDYTILTSENFNKAVLDSVDNDEAKRIIQLCERCYYL.

This is an uncharacterized protein from Methanocaldococcus jannaschii (strain ATCC 43067 / DSM 2661 / JAL-1 / JCM 10045 / NBRC 100440) (Methanococcus jannaschii).